The following is a 132-amino-acid chain: Small ribosomal subunit protein uS8 (132 aa).

This sequence belongs to the universal ribosomal protein uS8 family. Part of the 30S ribosomal subunit. Contacts proteins S5 and S12.

One of the primary rRNA binding proteins, it binds directly to 16S rRNA central domain where it helps coordinate assembly of the platform of the 30S subunit. This Pediococcus pentosaceus (strain ATCC 25745 / CCUG 21536 / LMG 10740 / 183-1w) protein is Small ribosomal subunit protein uS8.